Reading from the N-terminus, the 110-residue chain is MSSDDKNKPGEPKNEPKQCDPGCEQKCETKCQPSCLKRLLQRCSEKCQPPKCPPPKCTPCPPCPPSCPPPPKCPPPCPPPCPPPCPPPCPPKPCVKSCPPKCPPPCPPPE.

A disordered region spans residues 1–24 (MSSDDKNKPGEPKNEPKQCDPGCE).

This sequence belongs to the cornifin (SPRR) family.

The chain is Late cornified envelope-like proline-rich protein 1 (LELP1) from Bos taurus (Bovine).